A 280-amino-acid polypeptide reads, in one-letter code: Beta-lactamase OXA-58 (280 aa).

A signal peptide spans 1–18 (MKLLKILSLVCLSISIGA). A lipid anchor (N-palmitoyl cysteine) is attached at cysteine 19. Cysteine 19 is lipidated: S-diacylglycerol cysteine. Serine 83 (acyl-ester intermediate) is an active-site residue. Residues serine 83, lysine 86, serine 130, serine 221, tryptophan 223, and arginine 263 each coordinate a beta-lactam. N6-carboxylysine is present on lysine 86.

Belongs to the class-D beta-lactamase family. In terms of assembly, monomer. Dimer. In terms of processing, carboxylated on the epsilon-amino group of a lysine, with the resulting carbamate functional group serving as a general base. Probably N-carboxylated at Lys-86 at neutral pH in vivo and undergoes complete N-decarboxylation, at pH 4.1, in vitro. N-carboxylation at Lys-86 probably increases catalytic activity under physiological conditions.

It localises to the cell membrane. It carries out the reaction a beta-lactam + H2O = a substituted beta-amino acid. With respect to regulation, activated approximately 3-fold by the presence of 0.1M NaHCO3. Class D beta-lactamase which confers resistance to the beta-lactam antibiotics, including penicillins and oxacillin, and moderate resistance to carbapenems such as imipenem; in the DH10B strain of E.coli. Acts via hydrolysis of the beta-lactam ring. Has benzylpenicillin-, oxacillin-, cephalothin- and imipenem-hydrolyzing activities. This Acinetobacter baumannii protein is Beta-lactamase OXA-58.